Reading from the N-terminus, the 670-residue chain is Transcription factor Ken 2 (670 aa).

In terms of domain architecture, BTB spans 108–176 (TDLLLICDGK…LYSGQVYVRS (69 aa)). Disordered regions lie at residues 200 to 288 (SDGS…DRDR) and 307 to 470 (NNHP…SDDA). Positions 218–230 (NRNTEGITGSSVV) are enriched in polar residues. Positions 325-338 (HHLHHHHHHHHRQL) are enriched in basic residues. 2 stretches are compositionally biased toward gly residues: residues 351–368 (GGGS…GESG) and 389–400 (SGGGGAGSGRRS). A compositionally biased stretch (acidic residues) spans 407–419 (EPAEDDEDYELDV). Polar residues predominate over residues 451–464 (SDPVNLSIVKQQQD). The segment at 586 to 594 (NLKTHLRVH) adopts a C2H2-type 1; degenerate zinc-finger fold. 2 C2H2-type zinc fingers span residues 600-623 (FACR…CSVH) and 636-658 (YTCC…LSGH).

Its subcellular location is the nucleus. Functionally, transcription factor required for terminalia development. Negative regulator of the JAK/STAT pathway: represses JAK/STAT-dependent expression of ventral veins lacking (vvl) in the posterior spiracles. The protein is Transcription factor Ken 2 of Culex quinquefasciatus (Southern house mosquito).